A 735-amino-acid chain; its full sequence is Dolichyl-diphosphooligosaccharide--protein glycosyltransferase subunit STT3B (735 aa).

Over 1-38 (MGGKSEPAKSESMATKPDLLNTSFFSFKSLKLKTKQQE) the chain is Cytoplasmic. Residues 39–59 (LLLRISILGLVYILAFIARLF) traverse the membrane as a helical segment. The Lumenal segment spans residues 60–142 (SVLRYESMIH…VHIREVCVLT (83 aa)). The short motif at 70–72 (EFD) is the DXD motif 1 element. Aspartate 72 contributes to the Mn(2+) binding site. A helical transmembrane segment spans residues 143-161 (APFFASNTTLVAYFFGKEL). Over 162–163 (WD) the chain is Cytoplasmic. Residues 164–181 (TGAGLVAAVLIAICPGYI) traverse the membrane as a helical segment. At 182 to 192 (SRSVAGSYDNE) the chain is on the lumenal side. Residues aspartate 190 and glutamate 192 each coordinate Mn(2+). The DXD motif 2 motif lies at 190–192 (DNE). A helical membrane pass occupies residues 193 to 212 (AVAIFALLLTFYLFVKAVNT). At 213 to 214 (GS) the chain is on the cytoplasmic side. A helical transmembrane segment spans residues 215–229 (LAWALASAFGYFYMV). The Lumenal portion of the chain corresponds to 230–234 (SAWGG). The chain crosses the membrane as a helical span at residues 235–251 (YVFIINLVPLYVLVLLI). The Cytoplasmic portion of the chain corresponds to 252–256 (TGRYS). A helical membrane pass occupies residues 257 to 282 (MRLYIAYNCMYILGMLLAMQIRFVGF). At 283–290 (QHVQSGEH) the chain is on the lumenal side. A helical transmembrane segment spans residues 291–310 (MGAMGVFLLMQVFYFLDWVK). The Cytoplasmic portion of the chain corresponds to 311 to 326 (YQLNDTKLFQTFLRIT). The chain crosses the membrane as a helical span at residues 327–347 (VTSAILVGGVAVGVGTASGYI). Residues 348-380 (SPWTGRFYSLLDPTYAKDHIPIIASVSEHQPTA) lie on the Lumenal side of the membrane. Residues 372-375 (SVSE) carry the SVSE motif motif. A helical membrane pass occupies residues 381-403 (WSSFMFDYHILLFLFPAGLYFCF). Residues 404-409 (KRLTDA) lie on the Cytoplasmic side of the membrane. A helical membrane pass occupies residues 410-426 (TIFIVMYGLTSLYFAGV). Residues 427–430 (MVRL) lie on the Lumenal side of the membrane. Residue arginine 429 participates in dolichyl diphosphooligosaccharide binding. A helical membrane pass occupies residues 431 to 452 (ILVATPAVCLISAIAVSATIKN). The Cytoplasmic segment spans residues 453–494 (LTSLLRTKQKVSQTGSTKGAGSSKASSKVTLDQSQPFQKNGA). Residues 495–515 (IALLVGVFYLLSRYAIHCTWV) form a helical membrane-spanning segment. Topologically, residues 516 to 735 (TAEAYSSPSI…YRVKPPTNRL (220 aa)) are lumenal. The interacts with target acceptor peptide in protein substrate stretch occupies residues 562 to 564 (WWD). Positions 562–566 (WWDYG) match the WWDYG motif motif. Tyrosine 567 is a dolichyl diphosphooligosaccharide binding site. N-linked (GlcNAc...) asparagine glycosylation is found at asparagine 574 and asparagine 581. Asparagine 585 is a glycosylation site (N-linked (GlcNAc...) (high mannose) asparagine). Residues 629–636 (DINKFLWM) carry the DK motif motif.

This sequence belongs to the STT3 family. As to quaternary structure, component of the oligosaccharyltransferase (OST) complex. Mg(2+) is required as a cofactor. Requires Mn(2+) as cofactor. Expressed preferentially in the root but also in the shoot.

It localises to the endoplasmic reticulum membrane. The enzyme catalyses a di-trans,poly-cis-dolichyl diphosphooligosaccharide + L-asparaginyl-[protein] = N(4)-(oligosaccharide-(1-&gt;4)-N-acetyl-beta-D-glucosaminyl-(1-&gt;4)-N-acetyl-beta-D-glucosaminyl)-L-asparaginyl-[protein] + a di-trans,poly-cis-dolichyl diphosphate + H(+). It participates in protein modification; protein glycosylation. In terms of biological role, catalytic subunit of the oligosaccharyl transferase (OST) complex that catalyzes the initial transfer of a defined glycan (Glc(3)Man(9)GlcNAc(2) in eukaryotes) from the lipid carrier dolichol-pyrophosphate to an asparagine residue within an Asn-X-Ser/Thr consensus motif in nascent polypeptide chains, the first step in protein N-glycosylation. N-glycosylation occurs cotranslationally and the complex associates with the Sec61 complex at the channel-forming translocon complex that mediates protein translocation across the endoplasmic reticulum (ER). All subunits are required for a maximal enzyme activity. This subunit contains the active site and the acceptor peptide and donor lipid-linked oligosaccharide (LLO) binding pockets. In Arabidopsis thaliana (Mouse-ear cress), this protein is Dolichyl-diphosphooligosaccharide--protein glycosyltransferase subunit STT3B (STT3B).